Reading from the N-terminus, the 237-residue chain is Flagellar L-ring protein (237 aa).

A signal peptide spans 1–24; it reads MNRPGFPRFSVLIASLCGITLLSG. Cys-25 carries the N-palmitoyl cysteine lipid modification. A lipid anchor (S-diacylglycerol cysteine) is attached at Cys-25.

It belongs to the FlgH family. As to quaternary structure, the basal body constitutes a major portion of the flagellar organelle and consists of four rings (L,P,S, and M) mounted on a central rod.

It is found in the cell outer membrane. Its subcellular location is the bacterial flagellum basal body. In terms of biological role, assembles around the rod to form the L-ring and probably protects the motor/basal body from shearing forces during rotation. The sequence is that of Flagellar L-ring protein from Pseudomonas syringae pv. tomato (strain ATCC BAA-871 / DC3000).